A 219-amino-acid chain; its full sequence is ATP-dependent Clp protease proteolytic subunit 1, mitochondrial (219 aa).

The transit peptide at 1–23 (MLRRILTTSSVRNLTSSTQARVG) directs the protein to the mitochondrion. S118 serves as the catalytic Nucleophile. H143 is a catalytic residue.

Belongs to the peptidase S14 family. In terms of assembly, tetradecamer that assembles into a two heptameric rings with a central cavity.

The protein localises to the mitochondrion matrix. The enzyme catalyses Hydrolysis of proteins to small peptides in the presence of ATP and magnesium. alpha-casein is the usual test substrate. In the absence of ATP, only oligopeptides shorter than five residues are hydrolyzed (such as succinyl-Leu-Tyr-|-NHMec, and Leu-Tyr-Leu-|-Tyr-Trp, in which cleavage of the -Tyr-|-Leu- and -Tyr-|-Trp bonds also occurs).. Functionally, clp cleaves peptides in various proteins in a process that requires ATP hydrolysis. Clp may be responsible for a fairly general and central housekeeping function rather than for the degradation of specific substrates. This Caenorhabditis briggsae protein is ATP-dependent Clp protease proteolytic subunit 1, mitochondrial.